A 260-amino-acid chain; its full sequence is Triosephosphate isomerase (260 aa).

11-13 (NWK) provides a ligand contact to substrate. The active-site Electrophile is the H103. Residue E175 is the Proton acceptor of the active site. Substrate is bound by residues G181, S220, and 241–242 (GG).

Belongs to the triosephosphate isomerase family. Homodimer.

The protein localises to the cytoplasm. It carries out the reaction D-glyceraldehyde 3-phosphate = dihydroxyacetone phosphate. It functions in the pathway carbohydrate biosynthesis; gluconeogenesis. The protein operates within carbohydrate degradation; glycolysis; D-glyceraldehyde 3-phosphate from glycerone phosphate: step 1/1. Its function is as follows. Involved in the gluconeogenesis. Catalyzes stereospecifically the conversion of dihydroxyacetone phosphate (DHAP) to D-glyceraldehyde-3-phosphate (G3P). In Shewanella loihica (strain ATCC BAA-1088 / PV-4), this protein is Triosephosphate isomerase.